We begin with the raw amino-acid sequence, 406 residues long: Probable 2,3-bisphosphoglycerate-independent phosphoglycerate mutase (406 aa).

Belongs to the BPG-independent phosphoglycerate mutase family. A-PGAM subfamily.

The enzyme catalyses (2R)-2-phosphoglycerate = (2R)-3-phosphoglycerate. It functions in the pathway carbohydrate degradation; glycolysis; pyruvate from D-glyceraldehyde 3-phosphate: step 3/5. Its function is as follows. Catalyzes the interconversion of 2-phosphoglycerate and 3-phosphoglycerate. The sequence is that of Probable 2,3-bisphosphoglycerate-independent phosphoglycerate mutase from Thermus thermophilus (strain ATCC BAA-163 / DSM 7039 / HB27).